The following is a 455-amino-acid chain: GTPase Der (455 aa).

2 consecutive EngA-type G domains span residues 4 to 169 and 178 to 353; these read PIVA…PPKH and IQMA…EQHR. GTP is bound by residues 10 to 17, 57 to 61, 120 to 123, 184 to 191, 231 to 235, and 296 to 299; these read GRPNVGKS, DTGGL, NKCE, DTAGI, and NKWD. The KH-like domain maps to 354–439; the sequence is RRVSTSVVNE…PLKLFWRGKQ (86 aa).

Belongs to the TRAFAC class TrmE-Era-EngA-EngB-Septin-like GTPase superfamily. EngA (Der) GTPase family. Associates with the 50S ribosomal subunit.

GTPase that plays an essential role in the late steps of ribosome biogenesis. This chain is GTPase Der, found in Prochlorococcus marinus (strain MIT 9313).